The primary structure comprises 229 residues: Peptidase E (229 aa).

Active-site charge relay system residues include Ser120, Asp135, and His157.

The protein belongs to the peptidase S51 family.

It localises to the cytoplasm. It carries out the reaction Dipeptidase E catalyzes the hydrolysis of dipeptides Asp-|-Xaa. It does not act on peptides with N-terminal Glu, Asn or Gln, nor does it cleave isoaspartyl peptides.. Hydrolyzes dipeptides containing N-terminal aspartate residues. May play a role in allowing the cell to use peptide aspartate to spare carbon otherwise required for the synthesis of the aspartate family of amino acids. This is Peptidase E from Salmonella arizonae (strain ATCC BAA-731 / CDC346-86 / RSK2980).